The sequence spans 21 residues: Testis ecdysiotropin peptide 1 (21 aa).

Residues 1-21 (ISDFDEYEPLNDADNNEVLDF) are disordered.

In terms of biological role, start or boost ecdysteroid synthesis in testis of larvae and pupae. This is Testis ecdysiotropin peptide 1 from Lymantria dispar (Gypsy moth).